The sequence spans 293 residues: Light-independent protochlorophyllide reductase iron-sulfur ATP-binding protein (293 aa).

ATP is bound by residues 10–15 (GIGKST) and Lys-39. Ser-14 is a binding site for Mg(2+). 2 residues coordinate [4Fe-4S] cluster: Cys-95 and Cys-129. 180-181 (NR) contacts ATP.

The protein belongs to the NifH/BchL/ChlL family. As to quaternary structure, homodimer. Protochlorophyllide reductase is composed of three subunits; ChlL, ChlN and ChlB. [4Fe-4S] cluster serves as cofactor.

It localises to the plastid. The protein resides in the chloroplast. The enzyme catalyses chlorophyllide a + oxidized 2[4Fe-4S]-[ferredoxin] + 2 ADP + 2 phosphate = protochlorophyllide a + reduced 2[4Fe-4S]-[ferredoxin] + 2 ATP + 2 H2O. Its pathway is porphyrin-containing compound metabolism; chlorophyll biosynthesis (light-independent). Functionally, component of the dark-operative protochlorophyllide reductase (DPOR) that uses Mg-ATP and reduced ferredoxin to reduce ring D of protochlorophyllide (Pchlide) to form chlorophyllide a (Chlide). This reaction is light-independent. The L component serves as a unique electron donor to the NB-component of the complex, and binds Mg-ATP. In Adiantum capillus-veneris (Maidenhair fern), this protein is Light-independent protochlorophyllide reductase iron-sulfur ATP-binding protein.